Here is a 352-residue protein sequence, read N- to C-terminus: Lipopolysaccharide core biosynthesis mannosyltransferase LpcC (352 aa).

Belongs to the glycosyltransferase group 1 family. Glycosyltransferase 4 subfamily.

It participates in bacterial outer membrane biogenesis; LPS core biosynthesis. Functionally, acts at transfer of mannose group to a 3-deoxy-D-mono octulonic acid (KDO) via an alpha-1,5 linkage. This Rhizobium leguminosarum bv. viciae protein is Lipopolysaccharide core biosynthesis mannosyltransferase LpcC (lpcC).